We begin with the raw amino-acid sequence, 410 residues long: Chaperonin GroEL (410 aa).

ATP contacts are provided by residues 29–32, lysine 50, and 86–90; these read TAGP and DGTTT.

The protein belongs to the chaperonin (HSP60) family. In terms of assembly, forms a cylinder of 14 subunits composed of two heptameric rings stacked back-to-back. Interacts with the co-chaperonin GroES.

It is found in the cytoplasm. It carries out the reaction ATP + H2O + a folded polypeptide = ADP + phosphate + an unfolded polypeptide.. In terms of biological role, together with its co-chaperonin GroES, plays an essential role in assisting protein folding. The GroEL-GroES system forms a nano-cage that allows encapsulation of the non-native substrate proteins and provides a physical environment optimized to promote and accelerate protein folding. The sequence is that of Chaperonin GroEL from Ehrlichia canis.